We begin with the raw amino-acid sequence, 457 residues long: Phosphomethylpyrimidine synthase (457 aa).

Residues asparagine 80, methionine 109, tyrosine 139, histidine 175, serine 195–glycine 197, aspartate 236–arginine 239, and glutamate 275 each bind substrate. A Zn(2+)-binding site is contributed by histidine 279. Position 302 (tyrosine 302) interacts with substrate. Histidine 343 lines the Zn(2+) pocket. Positions 423, 426, and 431 each coordinate [4Fe-4S] cluster.

Belongs to the ThiC family. [4Fe-4S] cluster serves as cofactor.

It carries out the reaction 5-amino-1-(5-phospho-beta-D-ribosyl)imidazole + S-adenosyl-L-methionine = 4-amino-2-methyl-5-(phosphooxymethyl)pyrimidine + CO + 5'-deoxyadenosine + formate + L-methionine + 3 H(+). The protein operates within cofactor biosynthesis; thiamine diphosphate biosynthesis. Functionally, catalyzes the synthesis of the hydroxymethylpyrimidine phosphate (HMP-P) moiety of thiamine from aminoimidazole ribotide (AIR) in a radical S-adenosyl-L-methionine (SAM)-dependent reaction. This is Phosphomethylpyrimidine synthase from Nostoc punctiforme (strain ATCC 29133 / PCC 73102).